The following is a 171-amino-acid chain: 3-hydroxydecanoyl-[acyl-carrier-protein] dehydratase (171 aa).

His70 is an active-site residue.

Belongs to the thioester dehydratase family. FabA subfamily. In terms of assembly, homodimer.

It is found in the cytoplasm. The enzyme catalyses a (3R)-hydroxyacyl-[ACP] = a (2E)-enoyl-[ACP] + H2O. The catalysed reaction is (3R)-hydroxydecanoyl-[ACP] = (2E)-decenoyl-[ACP] + H2O. It carries out the reaction (2E)-decenoyl-[ACP] = (3Z)-decenoyl-[ACP]. It participates in lipid metabolism; fatty acid biosynthesis. Its function is as follows. Necessary for the introduction of cis unsaturation into fatty acids. Catalyzes the dehydration of (3R)-3-hydroxydecanoyl-ACP to E-(2)-decenoyl-ACP and then its isomerization to Z-(3)-decenoyl-ACP. Can catalyze the dehydratase reaction for beta-hydroxyacyl-ACPs with saturated chain lengths up to 16:0, being most active on intermediate chain length. The sequence is that of 3-hydroxydecanoyl-[acyl-carrier-protein] dehydratase from Nitrosococcus oceani (strain ATCC 19707 / BCRC 17464 / JCM 30415 / NCIMB 11848 / C-107).